Here is a 418-residue protein sequence, read N- to C-terminus: Pestheic acid cluster transcriptional regulator 1 (418 aa).

Residues 244–272 are disordered; sequence GTAVTTTATTSSSFISKSSEEPSPKRIKP. The span at 245-260 shows a compositional bias: low complexity; it reads TAVTTTATTSSSFISK.

Its subcellular location is the nucleus. Its function is as follows. Transcription factor that, with ptaR2 and ptaR3, coregulates the expression of the gene cluster that mediates the biosynthesis of pestheic acid, a diphenyl ether which is a biosynthetic precursor of the unique chloropupukeananes. The protein is Pestheic acid cluster transcriptional regulator 1 of Pestalotiopsis fici (strain W106-1 / CGMCC3.15140).